Consider the following 452-residue polypeptide: Putrescine hydroxycinnamoyltransferase (452 aa).

The Proton acceptor role is filled by His-151. The tract at residues 213–234 is disordered; the sequence is PAAGVDGDVGGDHKQQHGHGGE. The segment covering 222–234 has biased composition (basic and acidic residues); the sequence is GGDHKQQHGHGGE. The active-site Proton acceptor is the Asp-398.

Belongs to the plant acyltransferase family. Highly expressed in roots. Expressed at low levels in flowers.

Functionally, hydroxycinnamoyl transferase that catalyzes the transfer of an acyl from p-coumaryol-CoA to putrescine, to produce coumaroyl putrescine. Can use feruloyl-CoA, caffeoyl-CoA and sinapoyl-CoA as acyl donors. Seems to be able to transfer the acyl group from feruloyl-CoA to the acyl acceptors agmatine and spermidine. The chain is Putrescine hydroxycinnamoyltransferase from Oryza sativa subsp. japonica (Rice).